A 228-amino-acid chain; its full sequence is UPF0173 metal-dependent hydrolase lmo1577 (228 aa).

This sequence belongs to the UPF0173 family.

This is UPF0173 metal-dependent hydrolase lmo1577 from Listeria monocytogenes serovar 1/2a (strain ATCC BAA-679 / EGD-e).